The sequence spans 147 residues: MTTTIYILNGPNLNLLGQRQPEIYGHETLADVERRCAAVAAEKGFSVRLFQSNHEGAIVDQIHEARQAACGIVINPAAYTHTSVAILDALHAFEGPVIECHISNVHKRESFRHHSYVSLRADGVLAGFGIEGYELAVRRICSLCAGG.

Catalysis depends on Y24, which acts as the Proton acceptor. Residues N75, H81, and D88 each contribute to the substrate site. Residue H101 is the Proton donor of the active site. Substrate-binding positions include 102–103 (IS) and R112.

The protein belongs to the type-II 3-dehydroquinase family. Homododecamer.

It carries out the reaction 3-dehydroquinate = 3-dehydroshikimate + H2O. Its pathway is metabolic intermediate biosynthesis; chorismate biosynthesis; chorismate from D-erythrose 4-phosphate and phosphoenolpyruvate: step 3/7. Functionally, catalyzes a trans-dehydration via an enolate intermediate. The chain is 3-dehydroquinate dehydratase from Cereibacter sphaeroides (strain KD131 / KCTC 12085) (Rhodobacter sphaeroides).